Consider the following 133-residue polypeptide: UPF0292 protein TK1411 (133 aa).

The Toprim domain occupies 20–100 (EGALIVEGLR…SVDIETWKEL (81 aa)). Mg(2+)-binding residues include Glu-26, Asp-69, and Asp-71.

The protein belongs to the UPF0292 family. Mg(2+) is required as a cofactor.

In Thermococcus kodakarensis (strain ATCC BAA-918 / JCM 12380 / KOD1) (Pyrococcus kodakaraensis (strain KOD1)), this protein is UPF0292 protein TK1411.